The sequence spans 485 residues: Pentatricopeptide repeat-containing protein At1g62720 (485 aa).

PPR repeat units follow at residues S68–H102, D103–P137, D138–P172, D173–A207, D208–P242, N243–P277, D278–P312, D313–G347, D348–R378, N380–L414, D415–P449, and D450–P484.

The protein belongs to the PPR family. P subfamily.

This Arabidopsis thaliana (Mouse-ear cress) protein is Pentatricopeptide repeat-containing protein At1g62720.